The following is a 275-amino-acid chain: Protein COFACTOR ASSEMBLY OF COMPLEX C SUBUNIT B CCB2, chloroplastic (275 aa).

Residues methionine 1 to arginine 19 constitute a chloroplast transit peptide. At alanine 20–arginine 65 the chain is on the stromal side. A helical membrane pass occupies residues tryptophan 66–isoleucine 86. Residues serine 87 to serine 93 lie on the Lumenal side of the membrane. The chain crosses the membrane as a helical span at residues glutamate 94–leucine 114. The Stromal segment spans residues lysine 115 to glycine 275.

The protein resides in the plastid. Its subcellular location is the chloroplast thylakoid membrane. In terms of biological role, required for the biogenesis and accumulation of native cytochrome b6 in the thylakoid membrane. Controls the conversion of apocytochrome b6 to holocytochrome b6. Required for covalent binding of the c-type heme to cytochrome b6. This Arabidopsis thaliana (Mouse-ear cress) protein is Protein COFACTOR ASSEMBLY OF COMPLEX C SUBUNIT B CCB2, chloroplastic.